The sequence spans 735 residues: Catalase-peroxidase (735 aa).

Positions 97–220 (WHAAGTYRIG…LAAVQMGLIY (124 aa)) form a cross-link, tryptophyl-tyrosyl-methioninium (Trp-Tyr) (with M-246). His98 functions as the Proton acceptor in the catalytic mechanism. Positions 220 to 246 (YVNPEGPNGKPDPMAAAHDIRETFGRM) form a cross-link, tryptophyl-tyrosyl-methioninium (Tyr-Met) (with W-97). Heme b is bound at residue His261. Residues 342–362 (AHQWTPKNPEAASTVPDAHDP) form a disordered region.

The protein belongs to the peroxidase family. Peroxidase/catalase subfamily. Homodimer or homotetramer. Requires heme b as cofactor. In terms of processing, formation of the three residue Trp-Tyr-Met cross-link is important for the catalase, but not the peroxidase activity of the enzyme.

It catalyses the reaction H2O2 + AH2 = A + 2 H2O. The catalysed reaction is 2 H2O2 = O2 + 2 H2O. In terms of biological role, bifunctional enzyme with both catalase and broad-spectrum peroxidase activity. This is Catalase-peroxidase from Gloeobacter violaceus (strain ATCC 29082 / PCC 7421).